Consider the following 387-residue polypeptide: 1,3-propanediol dehydrogenase (387 aa).

The protein belongs to the iron-containing alcohol dehydrogenase family. As to quaternary structure, homooctamer. It depends on Fe cation as a cofactor.

The enzyme catalyses propane-1,3-diol + NAD(+) = 3-hydroxypropanal + NADH + H(+). With respect to regulation, inhibited by the metal chelator 1,10-phenanthroline. In terms of biological role, catalyzes the reduction of 3-hydroxypropanal. Is considerably less active with glyceraldehyde, propionaldehyde, acetaldehyde, and butyraldehyde. Also catalyzes the oxidation of various primary, secondary, and tertiary alcohols. Is most active with substrates containing two primary alcohol groups separated by one or two carbon atoms. 1,3-propanediol is the preferred substrate. The polypeptide is 1,3-propanediol dehydrogenase (Citrobacter freundii).